A 198-amino-acid chain; its full sequence is MRAFVLRARSAPTDSQLFLASVGQEPHTEILAHTLMNTIFVAQSHRNDVVVYLVLESTHDFSRTICFDTRNICHIGGFHEQALLTKIAKALDISRGMTKEQTRVVDEGITVSTISFEKLVQDLAVDYQLFMMDKKGTSIREQEFVGNPCFLLTDHIPMPKKSFNTLKRLGAQKISLGPKMLFASQCVVLIHNELDINQ.

Methionine 132 and cysteine 186 together coordinate S-adenosyl-L-methionine.

It belongs to the methyltransferase superfamily. TrmY family.

Its subcellular location is the cytoplasm. This chain is Putative pseudouridine methyltransferase, found in Shewanella baltica (strain OS185).